The chain runs to 250 residues: Doublesex- and mab-3-related transcription factor dmd-3 (250 aa).

The segment at residues 19–68 is a DNA-binding region (DM 1); sequence CQRCLNHGLREKRKNHKLSCTFRFCQCSNCIMVERRRQLNSRLMQIDGSR. Residues 90 to 100 are compositionally biased toward polar residues; sequence CTSQSETTNES. The segment at 90–115 is disordered; the sequence is CTSQSETTNESSGEDKDDGKPKERRP. The segment covering 102–115 has biased composition (basic and acidic residues); that stretch reads GEDKDDGKPKERRP. Residues 117–164 constitute a DNA-binding region (DM 2); sequence CQRCAQHSVVNRLKGHKRACPFRDCFCAKCQVVVERQKLMADQIKLRR. Positions 166 to 201 are disordered; the sequence is QKREKNNLNSEREAPIAHSMTPSPIDTVTTTTTPTS. Basic and acidic residues predominate over residues 169 to 180; it reads EKNNLNSEREAP. Low complexity predominate over residues 186 to 201; the sequence is TPSPIDTVTTTTTPTS.

The protein belongs to the DMRT family. In terms of tissue distribution, in males, expressed in the tail tip. Specifically, expressed in 15 male-specific muscles of the tail tip called the diagonal muscles, and also in core body muscles of both males and hermaphrodites. In males, expressed in ray A-neurons. In males, expressed in PHC sensory neurons. In males, it is also expressed in the hindgut, B lineage and somatic gonad. In hermaphrodites, expressed in the anchor cell only.

It localises to the nucleus. The protein localises to the perikaryon. Functionally, transcriptional activator which promotes male-specific development. Acts partially redundantly with the transcription factor mab-3 to coordinate tail tip cell fusion and retraction and thereby regulate male tail tip morphogenesis. This is most likely through the regulation of downstream effectors such as eff-1. May also negatively regulate the expression of other proteins implicated in male tail morphogenesis including nhr-25, vav-1 and arl-1 in tail tip cells. In males, plays a role in the development of ray A-neurons by negatively regulating the activity of the transcription factor ast-1. Plays a role in the male-specific differentiation of PHC sensory neurons into densely connected hub sensory neurons. Plays a role in male mating behavior. This Caenorhabditis elegans protein is Doublesex- and mab-3-related transcription factor dmd-3.